Reading from the N-terminus, the 494-residue chain is Glycogen synthase (494 aa).

K15 is an ADP-alpha-D-glucose binding site.

This sequence belongs to the glycosyltransferase 1 family. Bacterial/plant glycogen synthase subfamily.

The enzyme catalyses [(1-&gt;4)-alpha-D-glucosyl](n) + ADP-alpha-D-glucose = [(1-&gt;4)-alpha-D-glucosyl](n+1) + ADP + H(+). Its pathway is glycan biosynthesis; glycogen biosynthesis. Functionally, synthesizes alpha-1,4-glucan chains using ADP-glucose. This is Glycogen synthase from Albidiferax ferrireducens (strain ATCC BAA-621 / DSM 15236 / T118) (Rhodoferax ferrireducens).